The following is a 310-amino-acid chain: Phosphoribosylaminoimidazole-succinocarboxamide synthase (310 aa).

This sequence belongs to the SAICAR synthetase family.

It catalyses the reaction 5-amino-1-(5-phospho-D-ribosyl)imidazole-4-carboxylate + L-aspartate + ATP = (2S)-2-[5-amino-1-(5-phospho-beta-D-ribosyl)imidazole-4-carboxamido]succinate + ADP + phosphate + 2 H(+). It functions in the pathway purine metabolism; IMP biosynthesis via de novo pathway; 5-amino-1-(5-phospho-D-ribosyl)imidazole-4-carboxamide from 5-amino-1-(5-phospho-D-ribosyl)imidazole-4-carboxylate: step 1/2. The sequence is that of Phosphoribosylaminoimidazole-succinocarboxamide synthase from Cytophaga hutchinsonii (strain ATCC 33406 / DSM 1761 / CIP 103989 / NBRC 15051 / NCIMB 9469 / D465).